The following is a 951-amino-acid chain: Serine/threonine-protein phosphatase 4 regulatory subunit 1 (951 aa).

HEAT repeat units follow at residues 26-63 (ESDV…VFNR), 82-119 (RDCI…FCQE), 127-164 (AFSK…QELI), 168-206 (DVET…MVGK), 208-246 (ITER…VVGQ), 248-285 (ATEE…ATCQ), and 287-324 (IRRT…TFAN). Disordered regions lie at residues 326-395 (SSSG…DMRV), 407-501 (SESP…MATR), 539-569 (HDEA…SISE), and 592-612 (GGAD…ERRP). 3 stretches are compositionally biased toward basic and acidic residues: residues 332–360 (FKDE…RPED), 464–483 (DLDK…ERTG), and 539–551 (HDEA…RSEL). The stretch at 502 to 539 (KELEEMIENLEPHMDDPDVKAQVEVLSAALRASTLDAH) is one HEAT 8 repeat. The span at 594 to 604 (ADVGPGGGGGF) shows a compositional bias: gly residues. HEAT repeat units lie at residues 699 to 735 (LTAA…LLHI), 777 to 815 (RDVY…KLHM), 820 to 858 (TFGV…DDCL), and 862 to 899 (QFAV…EKEY). S936 is modified (phosphoserine).

As to quaternary structure, serine/threonine-protein phosphatase 4 (PP4) occurs in different assemblies of the catalytic and one or more regulatory subunits. Component of the PP4 complex PPP4C-PPP4R1. Interacts with HDAC3.

Functionally, regulatory subunit of serine/threonine-protein phosphatase 4. May play a role in regulation of cell division in renal glomeruli. The PPP4C-PPP4R1 PP4 complex may play a role in dephosphorylation and regulation of HDAC3. Plays a role in the inhibition of TNF-induced NF-kappa-B activation by regulating the dephosphorylation of TRAF2. This is Serine/threonine-protein phosphatase 4 regulatory subunit 1 (Ppp4r1) from Rattus norvegicus (Rat).